The following is a 422-amino-acid chain: Light-independent protochlorophyllide reductase subunit N (422 aa).

[4Fe-4S] cluster-binding residues include cysteine 26, cysteine 51, and cysteine 112.

It belongs to the BchN/ChlN family. Protochlorophyllide reductase is composed of three subunits; BchL, BchN and BchB. Forms a heterotetramer of two BchB and two BchN subunits. Requires [4Fe-4S] cluster as cofactor.

It carries out the reaction chlorophyllide a + oxidized 2[4Fe-4S]-[ferredoxin] + 2 ADP + 2 phosphate = protochlorophyllide a + reduced 2[4Fe-4S]-[ferredoxin] + 2 ATP + 2 H2O. It functions in the pathway porphyrin-containing compound metabolism; bacteriochlorophyll biosynthesis (light-independent). Component of the dark-operative protochlorophyllide reductase (DPOR) that uses Mg-ATP and reduced ferredoxin to reduce ring D of protochlorophyllide (Pchlide) to form chlorophyllide a (Chlide). This reaction is light-independent. The NB-protein (BchN-BchB) is the catalytic component of the complex. This chain is Light-independent protochlorophyllide reductase subunit N, found in Acidiphilium rubrum.